The following is a 1145-amino-acid chain: Error-prone DNA polymerase (1145 aa).

The protein belongs to the DNA polymerase type-C family. DnaE2 subfamily.

The protein localises to the cytoplasm. The catalysed reaction is DNA(n) + a 2'-deoxyribonucleoside 5'-triphosphate = DNA(n+1) + diphosphate. DNA polymerase involved in damage-induced mutagenesis and translesion synthesis (TLS). It is not the major replicative DNA polymerase. This chain is Error-prone DNA polymerase, found in Rhodopirellula baltica (strain DSM 10527 / NCIMB 13988 / SH1).